The following is a 526-amino-acid chain: Cytochrome P450 4e2 (526 aa).

2 residues coordinate heme: Glu-307 and Cys-444.

This sequence belongs to the cytochrome P450 family. Heme is required as a cofactor.

It localises to the endoplasmic reticulum membrane. The protein localises to the microsome membrane. In terms of biological role, may be involved in the metabolism of insect hormones and in the breakdown of synthetic insecticides. This Drosophila melanogaster (Fruit fly) protein is Cytochrome P450 4e2 (Cyp4e2).